A 1215-amino-acid chain; its full sequence is Protein benign gonial cell neoplasm (1215 aa).

One copy of the ANK repeat lies at 407–439 (TGKTAVHFASELNKANHLRLLLFMGADPYIVDL). Residue threonine 898 is modified to Phosphothreonine.

Part of a complex composed of at least mei-P26, bam, bgcn and Sxl; this complex is involved in translational repression of nanos mRNA. Interacts with bam (via C-terminus); the interaction is direct. Interacts with mei-P26; the interaction is direct and does not require bam. Weakly interacts with wh/wuho; this interaction may be required for the function or formation of the mei-P26-bgcn-bam-Sxl complex. Part of a complex composed of at least tut, bam and bgcn; complex formation does not require RNA. Interacts with tut; the interaction is indirect and is mediated by bam. As part of the bam-bgcn-tut complex associates with twin; may recruit the CCR4-NOT1 deadenylation complex to mRNA 3'UTRs to mediate post-transcriptional regulation of expression. Expressed in testis and in 5-8 germline stem cells of ovaries, immediately adjacent to terminal filament. Expressed in ovarian germline cells throughout the germarium (at protein level).

Functionally, forms a complex with tut and bam involved in 3'UTR-dependent post-transcriptional repression of several 3'-RNA processing factors, which promotes germline stem cell lineage differentiation and mitosis-to-meiosis transition. Part of a complex with bam involved in 3'-UTR-dependent translational repression of a subset of mRNAs, including those for mei-P26, nanos and shg/E-cadherin; may act as a promiscuous RNA-binding protein tethering bam to its target mRNAs. Required for regulating the progression of gonialblast cells through transit amplification and differentiation into gametes. This Drosophila melanogaster (Fruit fly) protein is Protein benign gonial cell neoplasm.